The chain runs to 195 residues: Recombination protein RecR (195 aa).

A C4-type zinc finger spans residues 53 to 68 (CPVCFNIDVKSPCSIC). The Toprim domain occupies 76–171 (QLLCIVEELG…KVTRLACGIP (96 aa)).

The protein belongs to the RecR family.

In terms of biological role, may play a role in DNA repair. It seems to be involved in an RecBC-independent recombinational process of DNA repair. It may act with RecF and RecO. This is Recombination protein RecR from Ehrlichia chaffeensis (strain ATCC CRL-10679 / Arkansas).